A 100-amino-acid polypeptide reads, in one-letter code: Small ribosomal subunit protein uS14 (100 aa).

This sequence belongs to the universal ribosomal protein uS14 family. Part of the 30S ribosomal subunit. Contacts proteins S3 and S10.

Functionally, binds 16S rRNA, required for the assembly of 30S particles and may also be responsible for determining the conformation of the 16S rRNA at the A site. The protein is Small ribosomal subunit protein uS14 of Prochlorococcus marinus (strain MIT 9211).